The sequence spans 332 residues: Glycerol-3-phosphate dehydrogenase [NAD(P)+] (332 aa).

Positions 10, 11, 31, 32, and 105 each coordinate NADPH. Sn-glycerol 3-phosphate is bound by residues Lys105, Gly136, and Ser138. An NADPH-binding site is contributed by Ala140. 5 residues coordinate sn-glycerol 3-phosphate: Lys191, Asp244, Ser254, Arg255, and Asn256. Residue Lys191 is the Proton acceptor of the active site. Arg255 is a binding site for NADPH. 2 residues coordinate NADPH: Val279 and Glu281.

The protein belongs to the NAD-dependent glycerol-3-phosphate dehydrogenase family.

The protein localises to the cytoplasm. It carries out the reaction sn-glycerol 3-phosphate + NAD(+) = dihydroxyacetone phosphate + NADH + H(+). The enzyme catalyses sn-glycerol 3-phosphate + NADP(+) = dihydroxyacetone phosphate + NADPH + H(+). Its pathway is membrane lipid metabolism; glycerophospholipid metabolism. In terms of biological role, catalyzes the reduction of the glycolytic intermediate dihydroxyacetone phosphate (DHAP) to sn-glycerol 3-phosphate (G3P), the key precursor for phospholipid synthesis. In Prosthecochloris aestuarii (strain DSM 271 / SK 413), this protein is Glycerol-3-phosphate dehydrogenase [NAD(P)+].